The sequence spans 18141 residues: Titin (18141 aa).

Residues 1–31 (MQRQNPNPYQQQNQQHQQVQQFSSQEYSHSS) are compositionally biased toward low complexity. The disordered stretch occupies residues 1-69 (MQRQNPNPYQ…QHHGGSIGGA (69 aa)). The span at 32–47 (QEQHQEQRISRTEQHV) shows a compositional bias: basic and acidic residues. Positions 48 to 62 (QRSQVTTQRQVQQHH) are enriched in low complexity. 17 consecutive Ig-like domains span residues 86 to 177 (PPVF…VYIQ), 255 to 343 (PQIS…AVLA), 372 to 461 (PAFV…AQLN), 471 to 559 (PQFV…ARLY), 618 to 708 (PQFI…AILS), 751 to 842 (PQFI…SSIR), 890 to 981 (PQFK…AQLT), 1024 to 1115 (PRFL…ATMI), 1158 to 1249 (PVFV…ACVR), 1291 to 1381 (PQFT…CSVR), 1424 to 1515 (PRFL…VELQ), 1558 to 1643 (PVFT…EAIT), 1691 to 1781 (PVFT…ASLI), 1824 to 1917 (PVFV…LNVT), 1958 to 2050 (PQFG…VNVT), 2089 to 2180 (PIFL…CNVR), and 2222 to 2313 (PHFT…TNLR). The disordered stretch occupies residues 236–266 (EQDSQLSQELDRNQGPAQAPQISQKPRSSKL). Cysteines 393 and 445 form a disulfide. 3 disulfides stabilise this stretch: Cys-1312/Cys-1365, Cys-1446/Cys-1499, and Cys-1579/Cys-1632. A disulfide bridge connects residues Cys-1846 and Cys-1899. The cysteines at positions 2111 and 2164 are disulfide-linked. Positions 2338–2347 (STAPHQRQEP) are enriched in basic and acidic residues. Residues 2338–2357 (STAPHQRQEPETPGTRQRPV) are disordered. 3 Ig-like domains span residues 2356–2449 (PVFT…MRVV), 2488–2581 (PIFT…MKVK), and 2622–2715 (PVFT…LKIE). Positions 2731–2750 (PRIGELEAPKEGRPEAPEPT) are disordered. Over residues 2734 to 2746 (GELEAPKEGRPEA) the composition is skewed to basic and acidic residues. Ig-like domains follow at residues 2754 to 2844 (PVFI…GTLK), 2891 to 2983 (PPVW…TTIF), 3029 to 3116 (PRFT…AEIS), 3130 to 3221 (PRFT…TTLN), 3263 to 3354 (PKFI…ASLK), 3401 to 3494 (PVFT…MKIQ), 3539 to 3625 (PEFI…ATVS), 3676 to 3767 (PKFT…AKVT), and 3811 to 3901 (PKFT…ATVS). Cysteines 2775 and 2828 form a disulfide. Cys-3152 and Cys-3205 are disulfide-bonded. 3 cysteine pairs are disulfide-bonded: Cys-3560-Cys-3613, Cys-3698-Cys-3751, and Cys-3832-Cys-3885. A TPR 1 repeat occupies 3910–3944 (LQNQVPRGMKRSDALTQMEATIKKYTSEVHLTEDD). Ig-like domains follow at residues 3954–4047 (PRFV…IKVS) and 4092–4181 (PVFV…LKVV). A disulfide bond links Cys-3976 and Cys-4029. Positions 4204–4229 (AAYQKERQENELEKVFDERKQVLSEQ) form a coiled coil. 2 disordered regions span residues 4226–4254 (LSEQSSHTLKGVEHLKPKQYKPPTPDWQQ) and 4299–4336 (SSQAKGMAQSYEENLQEKTSTTEVQAAPPKGIAQPSES). Residues 4309–4322 (YEENLQEKTSTTEV) are compositionally biased toward polar residues. Ig-like domains lie at 4394–4482 (PVFT…ANLV), 4497–4585 (PSFV…GDCI), 4604–4692 (PHIV…AQLK), and 4703–4791 (PTIT…AKLT). A TPR 2 repeat occupies 4403-4438 (CRVFENEQAKFEVEFEGEPNPTVKWYRESFPIQNSP). An intrachain disulfide couples Cys-4625 to Cys-4676. 8 disordered regions span residues 4803–4891 (RTID…DKGV), 5318–5368 (DELV…QPEP), 5413–5648 (RVIP…EVDA), 5667–5701 (IKKTKRPKSTKEVTEELFEEQPEEEISPEEEVPQK), 5718–5748 (KKTKKPKLTQQVTEEETPHEEIIKESEEVVQ), 5775–5982 (KEEE…QRLL), 6034–6350 (KRVK…MPVD), and 6364–6393 (EEEVVPTEETPEAKQKAHKKRTKRLKEASV). Positions 4822 to 4841 (PESPHAFQPGQQPGQQFGQF) are enriched in low complexity. A compositionally biased stretch (basic residues) spans 4852–4863 (GRSRQKKPKVRS). Composition is skewed to basic and acidic residues over residues 5344–5357 (QPQEKTFEEAHDEL), 5436–5447 (RPKEAVKAEEIQ), 5541–5552 (QKPDEQKQELPK), 5591–5621 (IEEKLDVAPTKTYEKAVDVLPDEPKVEEKPE), and 5633–5645 (PKSEPTEEVHPDE). The stretch at 5575–5613 (PVLWERKKKKPQPQDVIEEKLDVAPTKTYEKAVDVLPDE) is one TPR 3 repeat. A compositionally biased stretch (acidic residues) spans 5681 to 5697 (EELFEEQPEEEISPEEE). Composition is skewed to acidic residues over residues 5779–5792 (IPTEETVEEEETAE) and 5818–5860 (DVEE…QDEI). A compositionally biased stretch (basic residues) spans 5865 to 5874 (RKVKKAKKPK). Over residues 5883 to 5904 (EIEEDQPEEEVLQEEIIGEQEE) the composition is skewed to acidic residues. A compositionally biased stretch (basic residues) spans 5910 to 5920 (RKVKSIKKPKK). Basic and acidic residues predominate over residues 5921–5971 (VVTEKTVDQTEQPEKPEESQAEEVKETVTEEPKKPKPAPEEAKVEQVEKIS). A compositionally biased stretch (basic residues) spans 6034–6043 (KRVKKKKPKT). Residues 6049-6079 (ESTEEPAEETEEFEEEATQPEEVQPVEEIPE) show a composition bias toward acidic residues. Basic and acidic residues-rich tracts occupy residues 6081-6092 (PQVKEVADERKT), 6099-6133 (RKEEIIEKVEEVALKRVTRPKKELPQEATIEEVRL), 6141-6169 (IKPEEVKLEEVDLQHVEKKEDEIVQEEKR), 6195-6209 (EAEHIELEKQPKPEE), 6217-6234 (KRGEKKQPVEEVLEEKKW), and 6259-6268 (PIEEQQKPEK). Residues 6281-6290 (PESEEEELEL) are compositionally biased toward acidic residues. The span at 6291 to 6306 (EPLKLPEDKKPKEPKA) shows a compositional bias: basic and acidic residues. Basic residues predominate over residues 6307–6318 (KKEKKKKPKLKK). 2 stretches are compositionally biased toward acidic residues: residues 6325–6349 (EVSEEVAEPFDEPIAEEDEVEEMPV) and 6364–6373 (EEEVVPTEET). 7 Ig-like domains span residues 6536–6624 (PRIT…TNII), 6633–6728 (PQFT…NILS), 6741–6830 (PTVT…VVVS), 6841–6929 (PRFI…ATVN), 6942–7034 (PRFV…VKIQ), 7066–7151 (PKII…VAVT), and 7189–7279 (PSLL…FDIS). Cys-6557 and Cys-6608 form a disulfide bridge. A disulfide bridge links Cys-6964 with Cys-7016. The stretch at 7621–7663 (KIQVQTKQIAQMNTKIKKHKKHKQQEQEVSETTIQCEQKETLA) forms a coiled coil. 29 disordered regions span residues 7773–7793 (AKTAESSKELPSKIPKSVKAQ), 9414–9440 (EEDDKQPETTVTVEEVPYEEEKPEEIQ), 9485–9510 (EEDDKQPETTVTVEEVPYEEEKPEEI), 9556–9582 (EEDDKQPETTVTVEEVPYEEEKPEEIQ), 9627–9652 (EEDDKQPETTVTVEEVPYEEEKPEEI), 9698–9724 (EEDDKQPETTVTVEEVPYEEEKPEEIQ), 9769–9796 (EEDDKQPETTVTVEEVPYEEEKPEEIQE), 9838–9865 (TAEEDDKQPETTVTVEEVPYEEEKPEEI), 9911–9937 (EEDDKQPETTVTVEEVPYEEEKPEEIQ), 9982–10008 (EEDDKQPETTVTVEEVPYEEEKPEEIQ), 10053–10080 (EEDDKQPETTVTVEEVPYEEEKPEEIQE), 10125–10149 (ENDKQPETTVTVEEVPYEEEKPEEI), 10195–10220 (EEDDKQPKTTVTVEEVPYEEEKPEEI), 10266–10291 (EEDDKQPETTVTVEEVPYEEEKPEEI), 10337–10364 (EEDDKQPETTVTVEEVPYEEEKPEEIQE), 10408–10433 (EEDDKQPETTVTVEEVPYEEEKPEEI), 10479–10504 (EEDDKQPETTVTVEEVPYEEEKPEEI), 10550–10576 (EEDDKQPETTVTVEEVPYEEEKPEEIQ), 10621–10648 (EEDDKQPETTVTVEEVPYEEEKPEEIQE), 10692–10717 (EEDDKQPETTVTVEEVPYEEEKPEEI), 10763–10788 (EEDDKQPETTVTVEEVPYEEEKPEEI), 10834–10860 (EEDDKQPETTVTVEEVPYEEEKPEEIQ), 10905–10932 (EEDDKQPETTVTVEEVPYEEEKPEEIQE), 11047–11073 (EEDDKQPETTVTVEEVPYEEEKPEEIQ), 11118–11143 (EEDDKQPETTVTVEEVPYEEEKPEEI), 11189–11216 (EEDDKQPETTVTVEEVPYEEEKPEEIQE), 11260–11286 (EEDDKQPETTVTVEEVPYEEEKPEEIQ), 11679–11703 (EELDENKKPKKKTTKTRTFKKRGPD), and 11767–11795 (TEPEEASADALQKPTKDKTPKQKKTLETP). Over residues 7774 to 7783 (KTAESSKELP) the composition is skewed to basic and acidic residues. Composition is skewed to acidic residues over residues 9429 to 9440 (VPYEEEKPEEIQ), 9500 to 9510 (VPYEEEKPEEI), 9571 to 9582 (VPYEEEKPEEIQ), 9642 to 9652 (VPYEEEKPEEI), 9713 to 9724 (VPYEEEKPEEIQ), 9784 to 9796 (VPYEEEKPEEIQE), 9855 to 9865 (VPYEEEKPEEI), 9926 to 9937 (VPYEEEKPEEIQ), 9997 to 10008 (VPYEEEKPEEIQ), 10068 to 10080 (VPYEEEKPEEIQE), 10139 to 10149 (VPYEEEKPEEI), 10210 to 10220 (VPYEEEKPEEI), 10281 to 10291 (VPYEEEKPEEI), 10352 to 10364 (VPYEEEKPEEIQE), 10423 to 10433 (VPYEEEKPEEI), 10494 to 10504 (VPYEEEKPEEI), 10565 to 10576 (VPYEEEKPEEIQ), 10636 to 10648 (VPYEEEKPEEIQE), 10707 to 10717 (VPYEEEKPEEI), 10778 to 10788 (VPYEEEKPEEI), 10849 to 10860 (VPYEEEKPEEIQ), 10920 to 10932 (VPYEEEKPEEIQE), 11062 to 11073 (VPYEEEKPEEIQ), 11133 to 11143 (VPYEEEKPEEI), 11204 to 11216 (VPYEEEKPEEIQE), and 11275 to 11286 (VPYEEEKPEEIQ). Basic residues predominate over residues 11686–11699 (KPKKKTTKTRTFKK). A compositionally biased stretch (basic and acidic residues) spans 11780–11792 (PTKDKTPKQKKTL). The stretch at 11872–11905 (KTVLQPYQRTEMELPQRARRDSSFKQPVKLTPMK) is one TPR 4 repeat. 18 disordered regions span residues 12003-12201 (FKHS…ADTK), 12451-12471 (TLQVGVTEHEPTKKLKTKKPE), 12685-12767 (TVDD…LPGP), 12943-12971 (IDHENAEEAPKVLKSKVSEEKPKSKKEKS), 13131-13154 (IKKKKVSPKHGPKEQVFEITETRP), 13325-13349 (QSFESPEPTEGEAHETKTKTKKPKK), 13471-13492 (EEYEPTEMDSKKKPKKKVKSHN), 13554-13576 (EADKPIKQPTQDQPIKKEKPLKK), 13702-13792 (KVQK…KSPD), 13891-13914 (EEVQEKSKEAPEEKKAKTVRKAKK), 13951-13994 (MKRK…DEPK), 14073-14094 (TTVPTETPDQDQPSVKQKRTKK), 14109-14322 (EEEA…QVTT), 14354-14377 (EYEPEPVNQDEKPKEPKKKTRKVK), 14414-14448 (PLDSPIDVLDESPKEVQKKDKKSRSTKVPNEETPV), 14533-14566 (EPEIASPQSIEEHPEQSKEKLAPKPKKTVRKVKK), 14583-14720 (KVDL…SELP), and 14756-14789 (VEESQPIVEEVEDEEPQPATEETVEDVTKPKSKK). 6 stretches are compositionally biased toward basic and acidic residues: residues 12022 to 12035 (ESDHSDKSNKELLH), 12044 to 12054 (EKIETPDESRK), 12124 to 12134 (MERTSDIREES), 12183 to 12201 (LNLRKRQGERPDDDKADTK), 12457 to 12471 (TEHEPTKKLKTKKPE), and 12685 to 12709 (TVDDVRVPKDKKKKIDNQKKIKISE). Residues 12731 to 12741 (HDEDLQTDEYS) show a composition bias toward acidic residues. Over residues 12750 to 12760 (KSKKKSTKKQK) the composition is skewed to basic residues. Residues 13141 to 13154 (GPKEQVFEITETRP) show a composition bias toward basic and acidic residues. Basic residues predominate over residues 13482–13492 (KKPKKKVKSHN). Residues 13566-13599 (QPIKKEKPLKKKKDVEYPVSLEAFDHTVKVVSEP) form a TPR 5 repeat. Positions 13733 to 13747 (LVKEDLDQPIERALE) are enriched in basic and acidic residues. Residues 13771 to 13781 (PKPKKISKPKS) are compositionally biased toward basic residues. Basic and acidic residues-rich tracts occupy residues 13893-13906 (VQEKSKEAPEEKKA) and 13975-13984 (EDKPVEKISE). Over residues 14221–14240 (TVEKPLEALHTDSDLEKPDV) the composition is skewed to basic and acidic residues. The span at 14264-14274 (KISSEQPKQPS) shows a compositional bias: low complexity. Basic and acidic residues predominate over residues 14282–14294 (VTEHDLKPEEEKP). Residues 14542–14554 (IEEHPEQSKEKLA) are compositionally biased toward basic and acidic residues. The span at 14555–14564 (PKPKKTVRKV) shows a compositional bias: basic residues. Positions 14583 to 14599 (KVDLEKYEKVEMPEKPV) are enriched in basic and acidic residues. A compositionally biased stretch (low complexity) spans 14652-14662 (ETTVDTTDIPE). The segment covering 14664 to 14683 (TPTQTAQPEDTATAQITPSA) has biased composition (polar residues). A compositionally biased stretch (basic and acidic residues) spans 14684–14697 (QEEKSTQDDTKDTI). Over residues 14756-14771 (VEESQPIVEEVEDEEP) the composition is skewed to acidic residues. The TPR 6 repeat unit spans residues 14904–14936 (IPKTTDIGAIKDNGELSRNIEEAEEILKFKPHK). Disordered stretches follow at residues 14956 to 15208 (EKYI…VSVK), 15301 to 15329 (TRKKKPKPQQPEEFEVTLKEPKEEQIQPD), 15425 to 15448 (ISETQSIEEKPIEVAEEAPEETPK), 15578 to 15597 (IRVSESEPKPEEPSVEQFTV), 15697 to 15722 (EKPAEAIVEEEEPVVTEPIEEAPKPE), 15825 to 15876 (EEPK…VEEP), 15951 to 15973 (ESQPEAVEDKEVSLPKKKPKAPI), and 16181 to 16206 (QEEEYEEGEDIEEFVVSQQRKPKPLQ). Composition is skewed to basic and acidic residues over residues 14967-14989 (EKTPYKKPEKAPKPEEKQEDVKL), 15024-15046 (ELKQKPKEVEIVEEQTKKPKDGE), 15069-15080 (QIEHPEIPEKVK), 15088-15097 (KPKDKSKSEP), 15109-15139 (PKEEEAIPEQDVKFRKPERDAPEETDSEIKL), 15169-15179 (IEDKAIDDEKK), 15189-15198 (QPKEQEIAKE), 15316-15325 (VTLKEPKEEQ), 15425-15437 (ISETQSIEEKPIE), and 15578-15589 (IRVSESEPKPEE). Acidic residues predominate over residues 15703–15716 (IVEEEEPVVTEPIE). Residues 15951-15964 (ESQPEAVEDKEVSL) show a composition bias toward basic and acidic residues. Acidic residues predominate over residues 16183-16193 (EEYEEGEDIEE). Positions 16409-16470 (ENLNIMYSIC…PAQYLMEPEE (62 aa)) constitute an SH3 domain. Ig-like domains follow at residues 16501 to 16590 (PRFI…TELI), 16625 to 16719 (PTFS…ITLK), 16728 to 16811 (PQIL…ANLT), 16822 to 16916 (PPLF…VEVD), 16919 to 17001 (TFTK…STVE), 17007 to 17091 (PDFI…CELV), 17097 to 17180 (PEIV…AKLT), 17184 to 17270 (PLVD…TKLC), and 17277 to 17363 (PPVI…AEAS). Cys-16940 and Cys-16989 are joined by a disulfide. Residues 17374–17467 (APGTPQPLEI…LSPPIRLVPK (94 aa)) enclose the Fibronectin type-III 1 domain. 2 Ig-like domains span residues 17473–17558 (PSVQ…CRLK) and 17563–17653 (PVLE…CTVQ). The cysteines at positions 17494 and 17542 are disulfide-linked. Fibronectin type-III domains follow at residues 17660-17755 (RPQS…TKKF), 17760-17861 (PPRG…TPPS), 17862-17958 (PPQN…THAS), and 17982-18078 (PPTG…AMTA). A TPR 7 repeat occupies 17694–17728 (LEKCDVQNNVWMKVSDFNKDIKSYAVQKLSMNAQY). Residues 17741–17771 (SEPTESDPVTITKKFEKPSPPRGPTTVSGMN) form a disordered region.

Belongs to the protein kinase superfamily. CAMK Ser/Thr protein kinase family. As to quaternary structure, interacts with Msp300; this interaction mediates the recruitment of Msp300 to the Z-disks. Expressed in the mesoderm at stage 11, several hours before myoblast fusion, and persists in most muscle cells, somatic, visceral and pharyngeal muscles and their precursors, until the third instar. Isoform A: Expressed in the indirect flight muscle (at protein level).

It is found in the cytoplasm. Its subcellular location is the nucleus. It localises to the chromosome. The protein localises to the myofibril. The protein resides in the sarcomere. It is found in the z line. In terms of biological role, key component in the assembly and functioning of adult and embryonic striated muscles and muscle tendons. By providing connections at the level of individual microfilaments, it contributes to the fine balance of forces between the two halves of the sarcomere. The size and extensibility of the cross-links are the main determinants of sarcomere extensibility properties of muscle. In non-muscle cells, seems to play a role in chromosome condensation and chromosome segregation during mitosis. Might link the lamina network to chromatin or nuclear actin, or both during interphase. The chain is Titin (sls) from Drosophila melanogaster (Fruit fly).